We begin with the raw amino-acid sequence, 781 residues long: DNA translocase FtsK 2 (781 aa).

4 helical membrane passes run 24-44 (LLGE…LTIL), 74-94 (FADV…LLLL), 120-140 (AGVT…LEAI), and 170-190 (GFTG…SLFF). Residues 191–781 (HFSWLNLAEQ…NRNGNVVEEE (591 aa)) lie on the Cytoplasmic side of the membrane. The region spanning 414 to 623 (GKPVVADLAK…FQVSSKIDSR (210 aa)) is the FtsK domain. Residue 434–439 (GSGKSV) participates in ATP binding.

This sequence belongs to the FtsK/SpoIIIE/SftA family. Homohexamer. Forms a ring that surrounds DNA.

Its subcellular location is the cell inner membrane. In terms of biological role, essential cell division protein that coordinates cell division and chromosome segregation. The N-terminus is involved in assembly of the cell-division machinery. The C-terminus functions as a DNA motor that moves dsDNA in an ATP-dependent manner towards the dif recombination site, which is located within the replication terminus region. Translocation stops specifically at Xer-dif sites, where FtsK interacts with the Xer recombinase, allowing activation of chromosome unlinking by recombination. FtsK orienting polar sequences (KOPS) guide the direction of DNA translocation. FtsK can remove proteins from DNA as it translocates, but translocation stops specifically at XerCD-dif site, thereby preventing removal of XerC and XerD from dif. The protein is DNA translocase FtsK 2 (ftsK2) of Ralstonia nicotianae (strain ATCC BAA-1114 / GMI1000) (Ralstonia solanacearum).